A 253-amino-acid polypeptide reads, in one-letter code: Phosphoadenosine 5'-phosphosulfate reductase (253 aa).

The active-site Nucleophile; cysteine thiosulfonate intermediate is cysteine 239.

This sequence belongs to the PAPS reductase family. CysH subfamily.

Its subcellular location is the cytoplasm. The catalysed reaction is [thioredoxin]-disulfide + sulfite + adenosine 3',5'-bisphosphate + 2 H(+) = [thioredoxin]-dithiol + 3'-phosphoadenylyl sulfate. The protein operates within sulfur metabolism; hydrogen sulfide biosynthesis; sulfite from sulfate: step 3/3. In terms of biological role, catalyzes the formation of sulfite from phosphoadenosine 5'-phosphosulfate (PAPS) using thioredoxin as an electron donor. This Aliivibrio salmonicida (strain LFI1238) (Vibrio salmonicida (strain LFI1238)) protein is Phosphoadenosine 5'-phosphosulfate reductase.